A 188-amino-acid polypeptide reads, in one-letter code: Potassium-transporting ATPase KdpC subunit (188 aa).

Residues methionine 13–alanine 33 form a helical membrane-spanning segment.

It belongs to the KdpC family. In terms of assembly, the system is composed of three essential subunits: KdpA, KdpB and KdpC.

Its subcellular location is the cell inner membrane. Functionally, part of the high-affinity ATP-driven potassium transport (or Kdp) system, which catalyzes the hydrolysis of ATP coupled with the electrogenic transport of potassium into the cytoplasm. This subunit acts as a catalytic chaperone that increases the ATP-binding affinity of the ATP-hydrolyzing subunit KdpB by the formation of a transient KdpB/KdpC/ATP ternary complex. The chain is Potassium-transporting ATPase KdpC subunit from Gloeobacter violaceus (strain ATCC 29082 / PCC 7421).